Here is a 229-residue protein sequence, read N- to C-terminus: Large ribosomal subunit protein uL1 (229 aa).

It belongs to the universal ribosomal protein uL1 family. As to quaternary structure, part of the 50S ribosomal subunit.

In terms of biological role, binds directly to 23S rRNA. The L1 stalk is quite mobile in the ribosome, and is involved in E site tRNA release. Protein L1 is also a translational repressor protein, it controls the translation of the L11 operon by binding to its mRNA. The chain is Large ribosomal subunit protein uL1 from Streptococcus pneumoniae (strain JJA).